The following is a 307-amino-acid chain: Elongation factor Ts (307 aa).

Positions 80–83 (TDFV) are involved in Mg(2+) ion dislocation from EF-Tu.

Belongs to the EF-Ts family.

The protein localises to the cytoplasm. Functionally, associates with the EF-Tu.GDP complex and induces the exchange of GDP to GTP. It remains bound to the aminoacyl-tRNA.EF-Tu.GTP complex up to the GTP hydrolysis stage on the ribosome. The protein is Elongation factor Ts of Albidiferax ferrireducens (strain ATCC BAA-621 / DSM 15236 / T118) (Rhodoferax ferrireducens).